Reading from the N-terminus, the 265-residue chain is Transcription factor BHLH089 (265 aa).

The interval 1-132 (MDPAPTLAAE…PPPPEPPKQD (132 aa)) is disordered. 2 stretches are compositionally biased toward gly residues: residues 17-29 (LGGG…GGRG) and 44-53 (SRGGGGGGGA). Residues 95-105 (SKSSGDNSSLR) show a composition bias toward polar residues. Residues 142–155 (QATDSHSLAERARR) are basic motif; degenerate. Residues 142 to 192 (QATDSHSLAERARREKISERMKILQDLVPGCNKVIGKASVLDEIINYIQAL) enclose the bHLH domain. A helix-loop-helix motif region spans residues 156–192 (EKISERMKILQDLVPGCNKVIGKASVLDEIINYIQAL).

The protein belongs to the bHLH protein family. In terms of assembly, interacts with RSS3.

It localises to the nucleus. Transcription factor that may regulate jasmonate-regulated genes. This chain is Transcription factor BHLH089, found in Oryza sativa subsp. japonica (Rice).